The primary structure comprises 313 residues: Porphobilinogen deaminase (313 aa).

The residue at position 242 (C242) is an S-(dipyrrolylmethanemethyl)cysteine.

The protein belongs to the HMBS family. Monomer. Dipyrromethane serves as cofactor.

The catalysed reaction is 4 porphobilinogen + H2O = hydroxymethylbilane + 4 NH4(+). Its pathway is porphyrin-containing compound metabolism; protoporphyrin-IX biosynthesis; coproporphyrinogen-III from 5-aminolevulinate: step 2/4. Functionally, tetrapolymerization of the monopyrrole PBG into the hydroxymethylbilane pre-uroporphyrinogen in several discrete steps. The protein is Porphobilinogen deaminase of Marinobacter nauticus (strain ATCC 700491 / DSM 11845 / VT8) (Marinobacter aquaeolei).